An 81-amino-acid chain; its full sequence is Cytotoxin I-like P-15 (81 aa).

Residues 1–21 form the signal peptide; sequence MKTLLLTLAAATIVCLDLGYT. 4 cysteine pairs are disulfide-bonded: Cys-24–Cys-42, Cys-35–Cys-59, Cys-63–Cys-74, and Cys-75–Cys-80.

Belongs to the three-finger toxin family. Short-chain subfamily. Type IA cytotoxin sub-subfamily. Monomer in solution; Homodimer and oligomer in the presence of negatively charged lipids forming a pore with a size ranging between 20 and 30 Angstroms. As to expression, expressed by the venom gland.

The protein resides in the secreted. It is found in the target cell membrane. Functionally, shows cytolytic activity on many different cells by forming pore in lipid membranes. In vivo, increases heart rate or kills the animal by cardiac arrest. In addition, it binds to heparin with high affinity, interacts with Kv channel-interacting protein 1 (KCNIP1) in a calcium-independent manner, and binds to integrin alpha-V/beta-3 (ITGAV/ITGB3) with moderate affinity. The protein is Cytotoxin I-like P-15 of Naja atra (Chinese cobra).